The primary structure comprises 445 residues: tRNA modification GTPase MnmE (445 aa).

The (6S)-5-formyl-5,6,7,8-tetrahydrofolate site is built by R20, E79, and K119. Residues 215–371 (GLKLAIIGPP…ILKNIENIAE (157 aa)) enclose the TrmE-type G domain. N225 contacts K(+). Residues 225 to 230 (NTGKSS), 244 to 250 (SNIAGTT), and 269 to 272 (DTAG) each bind GTP. S229 contacts Mg(2+). The K(+) site is built by S244, I246, and T249. T250 contributes to the Mg(2+) binding site. K445 contributes to the (6S)-5-formyl-5,6,7,8-tetrahydrofolate binding site.

Belongs to the TRAFAC class TrmE-Era-EngA-EngB-Septin-like GTPase superfamily. TrmE GTPase family. Homodimer. Heterotetramer of two MnmE and two MnmG subunits. The cofactor is K(+).

The protein resides in the cytoplasm. Functionally, exhibits a very high intrinsic GTPase hydrolysis rate. Involved in the addition of a carboxymethylaminomethyl (cmnm) group at the wobble position (U34) of certain tRNAs, forming tRNA-cmnm(5)s(2)U34. The sequence is that of tRNA modification GTPase MnmE from Rickettsia prowazekii (strain Madrid E).